The primary structure comprises 66 residues: Large ribosomal subunit protein bL35 (66 aa).

2 stretches are compositionally biased toward basic residues: residues 1-16 and 23-45; these read MPKFKTHRASAKRFKK and KRGHAYTSHRFHGKTKKQRRQLR. Residues 1 to 66 are disordered; the sequence is MPKFKTHRAS…RIRQMLSQMK (66 aa).

Belongs to the bacterial ribosomal protein bL35 family.

In Lacticaseibacillus casei (strain BL23) (Lactobacillus casei), this protein is Large ribosomal subunit protein bL35.